We begin with the raw amino-acid sequence, 149 residues long: Calmodulin (149 aa).

Alanine 2 carries the N-acetylalanine modification. 4 consecutive EF-hand domains span residues 8–43, 44–79, 81–116, and 117–149; these read EQIA…LGQN, PTEA…KMKD, DSEE…LGEK, and LTDE…MMAK. Ca(2+)-binding residues include aspartate 21, aspartate 23, aspartate 25, cysteine 27, glutamate 32, aspartate 57, aspartate 59, asparagine 61, threonine 63, glutamate 68, aspartate 94, aspartate 96, asparagine 98, and glutamate 105. Lysine 116 is subject to N6,N6,N6-trimethyllysine. Positions 130, 132, 134, 136, and 141 each coordinate Ca(2+).

It belongs to the calmodulin family. Post-translationally, the N-terminus is blocked.

In terms of biological role, calmodulin mediates the control of a large number of enzymes, ion channels and other proteins by Ca(2+). Among the enzymes to be stimulated by the calmodulin-Ca(2+) complex are a number of protein kinases and phosphatases. This Spinacia oleracea (Spinach) protein is Calmodulin.